We begin with the raw amino-acid sequence, 253 residues long: Triosephosphate isomerase, cytosolic (253 aa).

Substrate is bound by residues Asn-10 and Lys-12. Residue His-96 is the Electrophile of the active site. Glu-166 functions as the Proton acceptor in the catalytic mechanism.

The protein belongs to the triosephosphate isomerase family. As to quaternary structure, homodimer.

It localises to the cytoplasm. It carries out the reaction D-glyceraldehyde 3-phosphate = dihydroxyacetone phosphate. It functions in the pathway carbohydrate biosynthesis; gluconeogenesis. The protein operates within carbohydrate degradation; glycolysis; D-glyceraldehyde 3-phosphate from glycerone phosphate: step 1/1. In Oryza sativa subsp. japonica (Rice), this protein is Triosephosphate isomerase, cytosolic (TPI).